A 255-amino-acid polypeptide reads, in one-letter code: Tumor necrosis factor receptor superfamily member 9 (255 aa).

An N-terminal signal peptide occupies residues 1 to 23 (MGNSCYNIVATLLLVLNFERTRS). 4 TNFR-Cys repeats span residues 24 to 45 (LQDP…NQIC), 47 to 86 (PCPP…NAEC), 87 to 118 (DCTP…KGCK), and 119 to 159 (DCCF…VVCG). At 24-186 (LQDPCSNCPA…PAREPGHSPQ (163 aa)) the chain is on the extracellular side. Intrachain disulfides connect Cys28-Cys37, Cys31-Cys45, Cys48-Cys62, Cys65-Cys78, Cys68-Cys86, Cys88-Cys94, Cys99-Cys106, Cys102-Cys117, and Cys121-Cys133. Asn138 and Asn149 each carry an N-linked (GlcNAc...) asparagine glycan. The cysteines at positions 139 and 158 are disulfide-linked. The segment at 161 to 180 (SPADLSPGASSVTPPAPARE) is disordered. The helical transmembrane segment at 187–213 (IISFFLALTSTALLFLLFFLTLRFSVV) threads the bilayer. Over 214 to 255 (KRGRKKLLYIFKQPFMRPVQTTQEEDGCSCRFPEEEEGGCEL) the chain is Cytoplasmic. Residues 214–255 (KRGRKKLLYIFKQPFMRPVQTTQEEDGCSCRFPEEEEGGCEL) form an interaction with LRR-1 region.

As to quaternary structure, predominantly homodimeric, but may also exist as a monomer. Interacts with TRAF1, TRAF2 and TRAF3. Interacts with LRR-repeat protein 1/LRR-1. In terms of tissue distribution, expressed on the surface of activated T-cells.

It is found in the cell membrane. Its function is as follows. Receptor for TNFSF9/4-1BBL. Conveys a signal that enhances CD8(+) T-cell survival, cytotoxicity, and mitochondrial activity, thereby promoting immunity against viruses and tumors. This is Tumor necrosis factor receptor superfamily member 9 (TNFRSF9) from Homo sapiens (Human).